We begin with the raw amino-acid sequence, 231 residues long: Orotidine 5'-phosphate decarboxylase (231 aa).

Substrate is bound by residues D11, K33, 60–69, T119, R181, Q190, G210, and R211; that span reads DLKLHDIPNT. K62 functions as the Proton donor in the catalytic mechanism.

The protein belongs to the OMP decarboxylase family. Type 1 subfamily. In terms of assembly, homodimer.

The catalysed reaction is orotidine 5'-phosphate + H(+) = UMP + CO2. The protein operates within pyrimidine metabolism; UMP biosynthesis via de novo pathway; UMP from orotate: step 2/2. In terms of biological role, catalyzes the decarboxylation of orotidine 5'-monophosphate (OMP) to uridine 5'-monophosphate (UMP). The protein is Orotidine 5'-phosphate decarboxylase of Malacoplasma penetrans (strain HF-2) (Mycoplasma penetrans).